The sequence spans 294 residues: Picrinine-N-methytransferase TMT2 (294 aa).

Positions 75-84 are SAM motif I; that stretch reads LLDVGCGLGG. Residues 137–143 carry the Vacuolar targeting signal motif; the sequence is DGEFDVV. The interval 138–146 is SAM motif II; that stretch reads GEFDVVFTL. The tract at residues 165–174 is SAM motif III; sequence VGSPGAAIVV.

Belongs to the class I-like SAM-binding methyltransferase superfamily. gTMT family. In terms of assembly, homodimer.

The protein resides in the vacuole membrane. It catalyses the reaction picrinine + S-adenosyl-L-methionine = ervincine + S-adenosyl-L-homocysteine + H(+). It functions in the pathway alkaloid biosynthesis; vindoline biosynthesis. S-adenosyl-L-methionine-dependent N-methyltransferase involved in the biosynthesis of biologically active monoterpenoid indole alkaloids (MIAs) natural products including vindoline. Catalyzes the conversion of picrinine to N-methylpicrinine (ervincine). In Catharanthus roseus (Madagascar periwinkle), this protein is Picrinine-N-methytransferase TMT2.